The chain runs to 895 residues: Clathrin interactor EPSIN 2 (895 aa).

Positions 18–150 constitute an ENTH domain; it reads KKVLKVPGVE…NDKERIAEVR (133 aa). Basic and acidic residues-rich tracts occupy residues 150–161, 177–236, and 245–257; these read RQKAAANRDKYR, DKYD…RSRS, and RSSEREREDDGHS. The disordered stretch occupies residues 150 to 396; the sequence is RQKAAANRDK…PTVTSMSAPT (247 aa). Phosphoserine is present on residues Ser-270 and Ser-282. Low complexity predominate over residues 329-348; that stretch reads AAPEAASPPTGTNTANTTAT. Composition is skewed to polar residues over residues 349–358 and 387–396; these read FVNESPSQKV and PTVTSMSAPT. The short motif at 409–413 is the Clathrin binding element; it reads LADVF. Disordered regions lie at residues 436–533 and 758–784; these read AGPA…PQEQ and KQTNTPATSTINMGKAMGSGTGLGRSG. The span at 440-454 shows a compositional bias: low complexity; it reads PSFSTSQPSTQSFDD. The short motif at 454 to 456 is the ALPHA-ADR binding element; the sequence is DPF. Polar residues-rich tracts occupy residues 464-479, 515-533, and 759-769; these read FTSTDTDSTPQQNFGA, PASQNVQPPSNSPGFPQEQ, and QTNTPATSTIN.

The protein belongs to the epsin family. In terms of assembly, interacts with clathrin, VTI12, DELTA-ADR and ALPHA-ADR.

The protein resides in the golgi apparatus. It is found in the cytoplasmic vesicle. The protein localises to the clathrin-coated vesicle. Functionally, may have a role in transport via clathrin-coated vesicles from the trans-Golgi network to endosomes. Stimulates clathrin assembly. Binds to membranes enriched in phosphatidylinositol 3-phosphate (PtdIns(3)P). Plays an important role in protein trafficking. This Arabidopsis thaliana (Mouse-ear cress) protein is Clathrin interactor EPSIN 2 (EPSIN2).